We begin with the raw amino-acid sequence, 247 residues long: ATP synthase subunit a, chloroplastic (247 aa).

5 helical membrane-spanning segments follow: residues 38–58 (QVLI…ALAV), 95–115 (VPFI…GALL), 134–154 (INTT…AGLA), 199–219 (LVVV…VMFL), and 220–240 (GLFT…AYIG).

This sequence belongs to the ATPase A chain family. As to quaternary structure, F-type ATPases have 2 components, CF(1) - the catalytic core - and CF(0) - the membrane proton channel. CF(1) has five subunits: alpha(3), beta(3), gamma(1), delta(1), epsilon(1). CF(0) has four main subunits: a, b, b' and c.

It is found in the plastid. Its subcellular location is the chloroplast thylakoid membrane. Functionally, key component of the proton channel; it plays a direct role in the translocation of protons across the membrane. The sequence is that of ATP synthase subunit a, chloroplastic from Trachelium caeruleum (Blue throatwort).